A 527-amino-acid chain; its full sequence is MASLSLPITLKNPRFFSSSPQNIFKTQPQTLVLTTKFKTCSIICSSSCTSISSSTTQQKQSNKQTHVSDNKREEKAEEEEEEKEVSLREIWREVQGCNNWEGQLDPMNNHLRREIIRYGEFAQACYDSFDFDPHSKYCGSCKYHPSDFFLNLDLHLHKGYTITRYLYATSNINLPNFFQKSKLSSIWSQHANWMGFVAVATDEEEVSRLGRRDIVIAWRGTVTYLEWIYDLKDILCSANFGDDPSIKIELGFHDLYTKKEDSCKFSSFSAREQVLAEVKRLIEYYGTEEEGHKTSITVTGHSLGASLALVSAYDIAELNLNHVPENNYKIPITVFSFSGPRVGNLRFKERCDELGVKVLRVVNVHDKVPSVPGIFTNEKFQFQKYVEEKTSFPWSYAHVGVELALDHKKSPFLKPTKDLGCAHNLEALLHLVDGYHGKDEEAEKRFCLVTKRDIALVNKSCDFLRGEYHVPPCWRQDENKGMVKNGDGQWVLPDRPLLEPHGPEDIAHHLQQVLGKVNDDNFKPTTT.

The N-terminal 52 residues, 1 to 52 (MASLSLPITLKNPRFFSSSPQNIFKTQPQTLVLTTKFKTCSIICSSSCTSIS), are a transit peptide targeting the chloroplast. Low complexity predominate over residues 55-65 (TTQQKQSNKQT). The tract at residues 55–82 (TTQQKQSNKQTHVSDNKREEKAEEEEEE) is disordered. The segment covering 66–75 (HVSDNKREEK) has biased composition (basic and acidic residues). The short motif at 300–304 (GHSLG) is the GXSXG element. The Acyl-ester intermediate role is filled by serine 302. Residues aspartate 366 and histidine 423 each act as charge relay system in the active site.

This sequence belongs to the AB hydrolase superfamily. Lipase family. Highly expressed in flowers. Lower levels in seedlings, leaves and stems.

Its subcellular location is the plastid. It is found in the chloroplast. The enzyme catalyses 1,2-dihexadecanoyl-sn-glycero-3-phosphocholine + H2O = 2-hexadecanoyl-sn-glycero-3-phosphocholine + hexadecanoate + H(+). It carries out the reaction a 1,2-diacyl-3-O-(beta-D-galactosyl)-sn-glycerol + H2O = an acyl-3-O-(beta-D-galactosyl)-sn-glycerol + a fatty acid + H(+). The catalysed reaction is a 1,2-diacyl-3-O-[alpha-D-galactosyl-(1-&gt;6)-beta-D-galactosyl]-sn-glycerol + H2O = acyl-3-O-[alpha-D-galactosyl-(1-&gt;6)-beta-D-galactosyl]-sn-glycerol + a fatty acid + H(+). Its function is as follows. Acylhydrolase that catalyzes the hydrolysis of phosphatidylcholine at the sn-1 position. Moderate activity toward phosphatidylcholine (PC), monogalactosyldiacylglycerol (MGDG), digalactosyldiacylglycerol (DGDG) and triacylglycerol (TAG). In Arabidopsis thaliana (Mouse-ear cress), this protein is Phospholipase A1-Igamma3, chloroplastic.